The primary structure comprises 223 residues: Holliday junction branch migration complex subunit RuvA (223 aa).

Residues 1-64 form a domain I region; the sequence is MIGKLTGRLD…EDLLQLFGFL (64 aa). Positions 65–143 are domain II; that stretch reads SPYEKEWHRL…AVMAMGGTLD (79 aa). The tract at residues 144-171 is flexible linker; sequence DAMDDVVDDMPGESAAPAPAPQPRAPKR. The segment at 148 to 177 is disordered; that stretch reads DVVDDMPGESAAPAPAPQPRAPKRPASNAQ. The tract at residues 172-223 is domain III; that stretch reads PASNAQAEALSALQNLGYGPSDAAQAVAQAAESASNTPELIRAALRLLAPKE.

Belongs to the RuvA family. In terms of assembly, homotetramer. Forms an RuvA(8)-RuvB(12)-Holliday junction (HJ) complex. HJ DNA is sandwiched between 2 RuvA tetramers; dsDNA enters through RuvA and exits via RuvB. An RuvB hexamer assembles on each DNA strand where it exits the tetramer. Each RuvB hexamer is contacted by two RuvA subunits (via domain III) on 2 adjacent RuvB subunits; this complex drives branch migration. In the full resolvosome a probable DNA-RuvA(4)-RuvB(12)-RuvC(2) complex forms which resolves the HJ.

It localises to the cytoplasm. Functionally, the RuvA-RuvB-RuvC complex processes Holliday junction (HJ) DNA during genetic recombination and DNA repair, while the RuvA-RuvB complex plays an important role in the rescue of blocked DNA replication forks via replication fork reversal (RFR). RuvA specifically binds to HJ cruciform DNA, conferring on it an open structure. The RuvB hexamer acts as an ATP-dependent pump, pulling dsDNA into and through the RuvAB complex. HJ branch migration allows RuvC to scan DNA until it finds its consensus sequence, where it cleaves and resolves the cruciform DNA. This Jannaschia sp. (strain CCS1) protein is Holliday junction branch migration complex subunit RuvA.